A 203-amino-acid chain; its full sequence is Vexin (203 aa).

Basic and acidic residues predominate over residues histidine 59–tryptophan 70. The disordered stretch occupies residues histidine 59–asparagine 101.

Belongs to the vexin family.

It localises to the cell membrane. The protein resides in the nucleus. In terms of biological role, required for neurogenesis in the neural plate and retina. Strongly cooperates with neural bHLH factors to promote neurogenesis. This is Vexin from Bos taurus (Bovine).